Here is a 258-residue protein sequence, read N- to C-terminus: uncharacterized protein (258 aa).

The N-terminal stretch at 1–20 (MKCFQKLYIFILILIVLMAG) is a signal peptide. Cysteine 21 carries N-palmitoyl cysteine lipidation. Cysteine 21 carries S-diacylglycerol cysteine lipidation.

It belongs to the staphylococcal tandem lipoprotein family.

The protein localises to the cell membrane. This is an uncharacterized protein from Staphylococcus aureus (strain COL).